Here is a 196-residue protein sequence, read N- to C-terminus: ATP-dependent Clp protease proteolytic subunit (196 aa).

Ser-96 serves as the catalytic Nucleophile. The active site involves His-121.

The protein belongs to the peptidase S14 family. Fourteen ClpP subunits assemble into 2 heptameric rings which stack back to back to give a disk-like structure with a central cavity, resembling the structure of eukaryotic proteasomes.

The protein localises to the cytoplasm. The enzyme catalyses Hydrolysis of proteins to small peptides in the presence of ATP and magnesium. alpha-casein is the usual test substrate. In the absence of ATP, only oligopeptides shorter than five residues are hydrolyzed (such as succinyl-Leu-Tyr-|-NHMec, and Leu-Tyr-Leu-|-Tyr-Trp, in which cleavage of the -Tyr-|-Leu- and -Tyr-|-Trp bonds also occurs).. Its function is as follows. Cleaves peptides in various proteins in a process that requires ATP hydrolysis. Has a chymotrypsin-like activity. Plays a major role in the degradation of misfolded proteins. The sequence is that of ATP-dependent Clp protease proteolytic subunit from Streptococcus salivarius.